A 297-amino-acid chain; its full sequence is Acetyl-coenzyme A carboxylase carboxyl transferase subunit beta (297 aa).

The region spanning 25–294 (LWVKCPETGQ…VPPKGRLPAP (270 aa)) is the CoA carboxyltransferase N-terminal domain.

The protein belongs to the AccD/PCCB family. As to quaternary structure, acetyl-CoA carboxylase is a heterohexamer composed of biotin carboxyl carrier protein (AccB), biotin carboxylase (AccC) and two subunits each of ACCase subunit alpha (AccA) and ACCase subunit beta (AccD).

It localises to the cytoplasm. It catalyses the reaction N(6)-carboxybiotinyl-L-lysyl-[protein] + acetyl-CoA = N(6)-biotinyl-L-lysyl-[protein] + malonyl-CoA. The protein operates within lipid metabolism; malonyl-CoA biosynthesis; malonyl-CoA from acetyl-CoA: step 1/1. Component of the acetyl coenzyme A carboxylase (ACC) complex. Biotin carboxylase (BC) catalyzes the carboxylation of biotin on its carrier protein (BCCP) and then the CO(2) group is transferred by the transcarboxylase to acetyl-CoA to form malonyl-CoA. This chain is Acetyl-coenzyme A carboxylase carboxyl transferase subunit beta, found in Azorhizobium caulinodans (strain ATCC 43989 / DSM 5975 / JCM 20966 / LMG 6465 / NBRC 14845 / NCIMB 13405 / ORS 571).